The sequence spans 198 residues: Holliday junction branch migration complex subunit RuvA (198 aa).

The interval 1–63 (MYDYIKGQLT…EDAQLLFGFH (63 aa)) is domain I. The tract at residues 64–142 (SEEEKDVFLK…EAPKEESSKL (79 aa)) is domain II. Positions 143-147 (PKAKH) are flexible linker. The interval 148–198 (QENEQLDEAIEALLALGYKATELKKIRAFFEGTSETAEQYIKSALKMLMKG) is domain III.

It belongs to the RuvA family. As to quaternary structure, homotetramer. Forms an RuvA(8)-RuvB(12)-Holliday junction (HJ) complex. HJ DNA is sandwiched between 2 RuvA tetramers; dsDNA enters through RuvA and exits via RuvB. An RuvB hexamer assembles on each DNA strand where it exits the tetramer. Each RuvB hexamer is contacted by two RuvA subunits (via domain III) on 2 adjacent RuvB subunits; this complex drives branch migration. In the full resolvosome a probable DNA-RuvA(4)-RuvB(12)-RuvC(2) complex forms which resolves the HJ.

It localises to the cytoplasm. Its function is as follows. The RuvA-RuvB-RuvC complex processes Holliday junction (HJ) DNA during genetic recombination and DNA repair, while the RuvA-RuvB complex plays an important role in the rescue of blocked DNA replication forks via replication fork reversal (RFR). RuvA specifically binds to HJ cruciform DNA, conferring on it an open structure. The RuvB hexamer acts as an ATP-dependent pump, pulling dsDNA into and through the RuvAB complex. HJ branch migration allows RuvC to scan DNA until it finds its consensus sequence, where it cleaves and resolves the cruciform DNA. This Streptococcus equi subsp. zooepidemicus (strain MGCS10565) protein is Holliday junction branch migration complex subunit RuvA.